The sequence spans 306 residues: D-alanine--D-alanine ligase (306 aa).

The ATP-grasp domain maps to 101-301 (KKILAHAGLP…FPDLVEHLVR (201 aa)). Residue 129–185 (VAELGLPVVVKAPTQGSSIGVYIVEREEDLEARITDAVAYGGTRVLVEKFIAGPELT) participates in ATP binding. The Mg(2+) site is built by Asp-256, Glu-268, and Asn-270.

It belongs to the D-alanine--D-alanine ligase family. Mg(2+) is required as a cofactor. The cofactor is Mn(2+).

The protein resides in the cytoplasm. It carries out the reaction 2 D-alanine + ATP = D-alanyl-D-alanine + ADP + phosphate + H(+). It participates in cell wall biogenesis; peptidoglycan biosynthesis. Its function is as follows. Cell wall formation. The polypeptide is D-alanine--D-alanine ligase (Desulforudis audaxviator (strain MP104C)).